Reading from the N-terminus, the 302-residue chain is Nodulation protein D 3 (302 aa).

Positions 6-63 (LDLNLLVALDALMIERNLTAAARSINLSQPAMSAAVRRLRSYFRDELFTMRGREFVPT) constitute an HTH lysR-type domain. The segment at residues 23 to 42 (LTAAARSINLSQPAMSAAVR) is a DNA-binding region (H-T-H motif).

The protein belongs to the LysR transcriptional regulatory family.

In terms of biological role, nodD regulates the expression of the nodABCFE genes which encode other nodulation proteins. NodD is also a negative regulator of its own expression. Binds flavonoids as inducers. The chain is Nodulation protein D 3 (nodD3) from Rhizobium leguminosarum bv. phaseoli.